The following is a 199-amino-acid chain: NADH-quinone oxidoreductase subunit C (199 aa).

This sequence belongs to the complex I 30 kDa subunit family. As to quaternary structure, NDH-1 is composed of 14 different subunits. Subunits NuoB, C, D, E, F, and G constitute the peripheral sector of the complex.

It localises to the cell inner membrane. The enzyme catalyses a quinone + NADH + 5 H(+)(in) = a quinol + NAD(+) + 4 H(+)(out). Its function is as follows. NDH-1 shuttles electrons from NADH, via FMN and iron-sulfur (Fe-S) centers, to quinones in the respiratory chain. The immediate electron acceptor for the enzyme in this species is believed to be ubiquinone. Couples the redox reaction to proton translocation (for every two electrons transferred, four hydrogen ions are translocated across the cytoplasmic membrane), and thus conserves the redox energy in a proton gradient. This Paramagnetospirillum magneticum (strain ATCC 700264 / AMB-1) (Magnetospirillum magneticum) protein is NADH-quinone oxidoreductase subunit C.